Reading from the N-terminus, the 284-residue chain is Bifunctional protein FolD (284 aa).

NADP(+) is bound by residues 166 to 168 (GAS) and isoleucine 232.

The protein belongs to the tetrahydrofolate dehydrogenase/cyclohydrolase family. In terms of assembly, homodimer.

The catalysed reaction is (6R)-5,10-methylene-5,6,7,8-tetrahydrofolate + NADP(+) = (6R)-5,10-methenyltetrahydrofolate + NADPH. It carries out the reaction (6R)-5,10-methenyltetrahydrofolate + H2O = (6R)-10-formyltetrahydrofolate + H(+). Its pathway is one-carbon metabolism; tetrahydrofolate interconversion. Catalyzes the oxidation of 5,10-methylenetetrahydrofolate to 5,10-methenyltetrahydrofolate and then the hydrolysis of 5,10-methenyltetrahydrofolate to 10-formyltetrahydrofolate. The chain is Bifunctional protein FolD from Shewanella sediminis (strain HAW-EB3).